The sequence spans 450 residues: Adenylosuccinate lyase (450 aa).

N(6)-(1,2-dicarboxyethyl)-AMP contacts are provided by residues 9–10 (RY), 75–77 (HHD), and 101–102 (TS). Histidine 149 acts as the Proton donor/acceptor in catalysis. Residue glutamine 223 participates in N(6)-(1,2-dicarboxyethyl)-AMP binding. Serine 273 serves as the catalytic Proton donor/acceptor. Residues serine 274, 279-281 (KRN), and 318-322 (SVERV) contribute to the N(6)-(1,2-dicarboxyethyl)-AMP site.

Belongs to the lyase 1 family. Adenylosuccinate lyase subfamily. Homotetramer. Residues from neighboring subunits contribute catalytic and substrate-binding residues to each active site.

It catalyses the reaction N(6)-(1,2-dicarboxyethyl)-AMP = fumarate + AMP. The catalysed reaction is (2S)-2-[5-amino-1-(5-phospho-beta-D-ribosyl)imidazole-4-carboxamido]succinate = 5-amino-1-(5-phospho-beta-D-ribosyl)imidazole-4-carboxamide + fumarate. It participates in purine metabolism; AMP biosynthesis via de novo pathway; AMP from IMP: step 2/2. The protein operates within purine metabolism; IMP biosynthesis via de novo pathway; 5-amino-1-(5-phospho-D-ribosyl)imidazole-4-carboxamide from 5-amino-1-(5-phospho-D-ribosyl)imidazole-4-carboxylate: step 2/2. In terms of biological role, catalyzes two reactions in de novo purine nucleotide biosynthesis. Catalyzes the breakdown of 5-aminoimidazole- (N-succinylocarboxamide) ribotide (SAICAR or 2-[5-amino-1-(5-phospho-beta-D-ribosyl)imidazole-4-carboxamido]succinate) to 5-aminoimidazole-4-carboxamide ribotide (AICAR or 5-amino-1-(5-phospho-beta-D-ribosyl)imidazole-4-carboxamide) and fumarate, and of adenylosuccinate (ADS or N(6)-(1,2-dicarboxyethyl)-AMP) to adenosine monophosphate (AMP) and fumarate. This is Adenylosuccinate lyase (purB) from Pyrococcus horikoshii (strain ATCC 700860 / DSM 12428 / JCM 9974 / NBRC 100139 / OT-3).